We begin with the raw amino-acid sequence, 468 residues long: PTS system mannitol-specific EIICB component (468 aa).

Topologically, residues 1–25 are cytoplasmic; it reads MNNQPSFRARVQKFGSFLSGMIMPN. In terms of domain architecture, PTS EIIC type-2 spans 14–344; sequence FGSFLSGMIM…ILKTSKATAE (331 aa). A helical transmembrane segment spans residues 26–47; the sequence is IGAFIAWGLITALFIPTGWWPN. Topologically, residues 48-51 are extracellular; the sequence is EQLA. Residues 52 to 72 form a helical membrane-spanning segment; that stretch reads ELVGPMITYLLPLLIGYTGGK. Topologically, residues 73–135 are cytoplasmic; that stretch reads MIYDVRGGVV…SGFEMLVNNF (63 aa). The chain crosses the membrane as a helical span at residues 136-157; that stretch reads SAGILAAILAIVAFLGIGPVVV. Residues 158 to 166 are Extracellular-facing; sequence SFSNVLASG. A helical transmembrane segment spans residues 167–187; that stretch reads VEVIIGAGLLPLASIFIEPAK. Topologically, residues 188-274 are cytoplasmic; it reads VLFLNNAINH…ILMKPTLILA (87 aa). Residues 275 to 294 form a helical membrane-spanning segment; sequence VIAGGMSGVFTFVLFNAGLV. Over 295–314 the chain is Extracellular; it reads AVPSPGSIFALLAMTPRGEY. A helical transmembrane segment spans residues 315–336; sequence AGVLAGVIIATVVSFVIASIIL. Over 337–468 the chain is Cytoplasmic; the sequence is KTSKATAEDL…YDELVNRLKS (132 aa). A PTS EIIB type-2 domain is found at 380 to 468; it reads NKIIFACDAG…YDELVNRLKS (89 aa). The Phosphocysteine intermediate; for EIIB activity role is filled by C386. A Phosphocysteine; by EIIA modification is found at C386.

As to quaternary structure, homodimer.

It localises to the cell membrane. The enzyme catalyses D-mannitol(out) + N(pros)-phospho-L-histidyl-[protein] = D-mannitol 1-phosphate(in) + L-histidyl-[protein]. The phosphoenolpyruvate-dependent sugar phosphotransferase system (sugar PTS), a major carbohydrate active transport system, catalyzes the phosphorylation of incoming sugar substrates concomitantly with their translocation across the cell membrane. The enzyme II CmtAB PTS system is involved in D-mannitol transport. In Halalkalibacterium halodurans (strain ATCC BAA-125 / DSM 18197 / FERM 7344 / JCM 9153 / C-125) (Bacillus halodurans), this protein is PTS system mannitol-specific EIICB component (mtlA).